Consider the following 376-residue polypeptide: Palmitoyl-[acyl-carrier-protein] 4-desaturase 2, chloroplastic (376 aa).

A chloroplast-targeting transit peptide spans 1–33 (MELHLALRASPLPAADPGRRPPPPRGNFATNCT). Positions 114, 149, 152, 202, 235, and 238 each coordinate Fe cation.

The protein belongs to the fatty acid desaturase type 2 family. In terms of assembly, homodimer. It depends on Fe(2+) as a cofactor. In terms of tissue distribution, preferentially expressed in the flower labellum.

It is found in the plastid. The protein localises to the chloroplast stroma. It catalyses the reaction hexadecanoyl-[ACP] + 2 reduced [2Fe-2S]-[ferredoxin] + O2 + 2 H(+) = (4Z)-hexadecenoyl-[ACP] + 2 oxidized [2Fe-2S]-[ferredoxin] + 2 H2O. It carries out the reaction octadecanoyl-[ACP] + 2 reduced [2Fe-2S]-[ferredoxin] + O2 + 2 H(+) = (9Z)-octadecenoyl-[ACP] + 2 oxidized [2Fe-2S]-[ferredoxin] + 2 H2O. Its pathway is lipid metabolism; fatty acid metabolism. Its function is as follows. Converts stearoyl-ACP to oleoyl-ACP by introduction of a cis double bond between carbons 9 and 10 of the acyl chain. Converts palmitoyl-ACP to (4Z)-hexadec-4-enoyl-ACP by introduction of a cis double bond between carbons 4 and 5 of the acyl chain. Catalyzes the desaturation of saturated fatty acid 18:0 and 16:0 to generate 18:1 (delta-9) and 16:1 (delta-4) intermediates, expected to give rise to 9-alkenes and 12-alkenes, respectively. This Ophrys arachnitiformis subsp. archipelagi (Orchid) protein is Palmitoyl-[acyl-carrier-protein] 4-desaturase 2, chloroplastic (SAD2).